Here is a 143-residue protein sequence, read N- to C-terminus: Large ribosomal subunit protein uL11 (143 aa).

The protein belongs to the universal ribosomal protein uL11 family. As to quaternary structure, part of the ribosomal stalk of the 50S ribosomal subunit. Interacts with L10 and the large rRNA to form the base of the stalk. L10 forms an elongated spine to which L12 dimers bind in a sequential fashion forming a multimeric L10(L12)X complex. One or more lysine residues are methylated.

Functionally, forms part of the ribosomal stalk which helps the ribosome interact with GTP-bound translation factors. In Alkalilimnicola ehrlichii (strain ATCC BAA-1101 / DSM 17681 / MLHE-1), this protein is Large ribosomal subunit protein uL11.